The primary structure comprises 204 residues: Large ribosomal subunit protein eL15 (204 aa).

This sequence belongs to the eukaryotic ribosomal protein eL15 family. In terms of assembly, component of the large ribosomal subunit.

Its subcellular location is the cytoplasm. Functionally, component of the large ribosomal subunit. The ribosome is a large ribonucleoprotein complex responsible for the synthesis of proteins in the cell. The polypeptide is Large ribosomal subunit protein eL15 (rpl15) (Cyprinus carpio (Common carp)).